The following is a 237-amino-acid chain: Dynein axonemal assembly factor 19 (237 aa).

A coiled-coil region spans residues Asn-8–Lys-33.

It belongs to the DNAAF19/PR46b family. In terms of assembly, homodimer.

The protein localises to the cytoplasm. The protein resides in the cell projection. It localises to the cilium. It is found in the flagellum. Functionally, dynein-attachment factor required for cilia motility. This chain is Dynein axonemal assembly factor 19 (Dnaaf19), found in Mus musculus (Mouse).